Here is a 161-residue protein sequence, read N- to C-terminus: MORN repeat-containing protein 5 (161 aa).

3 MORN repeats span residues 8-30 (YIGE…TETI), 31-53 (YVGE…SGSQ), and 54-75 (YDAI…DGLH).

As to expression, expressed in sperm (at protein level).

The protein localises to the cell projection. It is found in the cilium. It localises to the flagellum. The sequence is that of MORN repeat-containing protein 5 (MORN5) from Homo sapiens (Human).